Reading from the N-terminus, the 682-residue chain is ATP-dependent zinc metalloprotease FtsH (682 aa).

The Cytoplasmic segment spans residues M1–T7. The chain crosses the membrane as a helical span at residues I8–G28. At T29 to T138 the chain is on the periplasmic side. Residues F139–F159 traverse the membrane as a helical segment. The Cytoplasmic segment spans residues F160–A682. G232 to T239 is a binding site for ATP. H454 lines the Zn(2+) pocket. E455 is a catalytic residue. Zn(2+)-binding residues include H458 and D531. The segment at L638 to A682 is disordered.

It in the central section; belongs to the AAA ATPase family. The protein in the C-terminal section; belongs to the peptidase M41 family. In terms of assembly, homohexamer. Zn(2+) is required as a cofactor.

It localises to the cell inner membrane. Its function is as follows. Acts as a processive, ATP-dependent zinc metallopeptidase for both cytoplasmic and membrane proteins. Plays a role in the quality control of integral membrane proteins. The polypeptide is ATP-dependent zinc metalloprotease FtsH (Haliangium ochraceum (strain DSM 14365 / JCM 11303 / SMP-2)).